A 163-amino-acid polypeptide reads, in one-letter code: Periplasmic nitrate reductase, electron transfer subunit (163 aa).

Residues 1–32 (MRSQDPSRRLSRRLWTLFALALCLVTGTVALA) form the signal peptide. Residues histidine 76, cysteine 90, cysteine 93, histidine 94, histidine 111, cysteine 130, cysteine 133, and histidine 134 each coordinate heme c.

Belongs to the NapB family. Component of the periplasmic nitrate reductase NapAB complex composed of NapA and NapB. In terms of processing, binds 2 heme C groups per subunit.

It localises to the periplasm. Functionally, electron transfer subunit of the periplasmic nitrate reductase complex NapAB. Receives electrons from the membrane-anchored tetraheme c-type NapC protein and transfers these to NapA subunit, thus allowing electron flow between membrane and periplasm. Essential for periplasmic nitrate reduction with nitrate as the terminal electron acceptor. This chain is Periplasmic nitrate reductase, electron transfer subunit, found in Neorhizobium galegae (Rhizobium galegae).